We begin with the raw amino-acid sequence, 446 residues long: 3-phosphoshikimate 1-carboxyvinyltransferase (446 aa).

The disordered stretch occupies residues 1–20 (MSTWPAPSTATPVHATVTVP). Positions 23, 24, and 28 each coordinate 3-phosphoshikimate. Lys23 contacts phosphoenolpyruvate. Phosphoenolpyruvate-binding residues include Gly100 and Arg128. 6 residues coordinate 3-phosphoshikimate: Ser171, Ser172, Gln173, Ser200, Glu315, and His344. Gln173 is a binding site for phosphoenolpyruvate. The Proton acceptor role is filled by Glu315. Phosphoenolpyruvate contacts are provided by Arg348, Arg389, and Lys414.

It belongs to the EPSP synthase family. Monomer.

It is found in the cytoplasm. The catalysed reaction is 3-phosphoshikimate + phosphoenolpyruvate = 5-O-(1-carboxyvinyl)-3-phosphoshikimate + phosphate. Its pathway is metabolic intermediate biosynthesis; chorismate biosynthesis; chorismate from D-erythrose 4-phosphate and phosphoenolpyruvate: step 6/7. Functionally, catalyzes the transfer of the enolpyruvyl moiety of phosphoenolpyruvate (PEP) to the 5-hydroxyl of shikimate-3-phosphate (S3P) to produce enolpyruvyl shikimate-3-phosphate and inorganic phosphate. The chain is 3-phosphoshikimate 1-carboxyvinyltransferase from Mycolicibacterium vanbaalenii (strain DSM 7251 / JCM 13017 / BCRC 16820 / KCTC 9966 / NRRL B-24157 / PYR-1) (Mycobacterium vanbaalenii).